Reading from the N-terminus, the 281-residue chain is Ribulose-5-phosphate-3-epimerase, chloroplastic (281 aa).

Residues 1 to 45 (MSTSAASLCCSSTQVNGFGLRPERSLLYQPTSFSFSRRRTHGIVK) constitute a chloroplast transit peptide. S63 contributes to the substrate binding site. 3 residues coordinate a divalent metal cation: H88, D90, and H121. D90 serves as the catalytic Proton acceptor. Residues H121, 199-202 (GFGG), 232-234 (DGG), and 254-256 (GSA) each bind substrate. D232 contacts a divalent metal cation. The active-site Proton donor is the D232.

The protein belongs to the ribulose-phosphate 3-epimerase family. In terms of assembly, homooctamer. The cofactor is Co(2+). Fe(2+) is required as a cofactor. It depends on Mn(2+) as a cofactor. Zn(2+) serves as cofactor. Present in roots, seeds and flowers. Accumulates in nematode feeding sites (NFS).

It is found in the plastid. The protein localises to the chloroplast thylakoid membrane. The enzyme catalyses D-ribulose 5-phosphate = D-xylulose 5-phosphate. Its pathway is carbohydrate biosynthesis; Calvin cycle. Essential protein required during embryogenesis. Catalyzes the reversible epimerization of D-ribulose 5-phosphate to D-xylulose 5-phosphate. Essential for the early steps of nematode feeding sites (NFS, multinucleated root cells) formation induced by the root-knot nematodes Heterodera schachtii, Meloidogyne incognita, M.javanica and M.hapla. The polypeptide is Ribulose-5-phosphate-3-epimerase, chloroplastic (Arabidopsis thaliana (Mouse-ear cress)).